Consider the following 194-residue polypeptide: Protein GrpE (194 aa).

The segment covering 1–12 (MNKQKNNRERTP) has biased composition (basic and acidic residues). Positions 1-44 (MNKQKNNRERTPQPEQDTERDEQLTNSHENDIDSAPAAEENDKV) are disordered.

This sequence belongs to the GrpE family. Homodimer.

It is found in the cytoplasm. Participates actively in the response to hyperosmotic and heat shock by preventing the aggregation of stress-denatured proteins, in association with DnaK and GrpE. It is the nucleotide exchange factor for DnaK and may function as a thermosensor. Unfolded proteins bind initially to DnaJ; upon interaction with the DnaJ-bound protein, DnaK hydrolyzes its bound ATP, resulting in the formation of a stable complex. GrpE releases ADP from DnaK; ATP binding to DnaK triggers the release of the substrate protein, thus completing the reaction cycle. Several rounds of ATP-dependent interactions between DnaJ, DnaK and GrpE are required for fully efficient folding. This Porphyromonas gingivalis (strain ATCC BAA-308 / W83) protein is Protein GrpE.